Here is a 714-residue protein sequence, read N- to C-terminus: Hormonally up-regulated neu tumor-associated kinase (714 aa).

Positions 1–15 are enriched in low complexity; sequence MPAAAGDGLLGEPAA. The interval 1–26 is disordered; it reads MPAAAGDGLLGEPAAPGGGGGAEDAA. Residues 62–320 enclose the Protein kinase domain; that stretch reads LIGSRKLGEG…IQQALANRWL (259 aa). Residues 68 to 76 and Lys91 contribute to the ATP site; that span reads LGEGSFAKV. Asp186 acts as the Proton acceptor in catalysis. A compositionally biased stretch (basic and acidic residues) spans 437 to 461; that stretch reads KKPKEQEKRGDFLHRPFSKKLDKNL. 3 disordered regions span residues 437-471, 518-552, and 590-615; these read KKPKEQEKRGDFLHRPFSKKLDKNLPSHKQPSGSL, MEFIPVPPPRTPRIVKKPEPHQPGPGSTGIPHKED, and ARRNSSERTLSPGLPSGSMSPLHTPL. Residues 599–611 show a composition bias toward low complexity; sequence LSPGLPSGSMSPL.

This sequence belongs to the protein kinase superfamily. CAMK Ser/Thr protein kinase family. SNF1 subfamily.

It carries out the reaction L-seryl-[protein] + ATP = O-phospho-L-seryl-[protein] + ADP + H(+). It catalyses the reaction L-threonyl-[protein] + ATP = O-phospho-L-threonyl-[protein] + ADP + H(+). In Homo sapiens (Human), this protein is Hormonally up-regulated neu tumor-associated kinase (HUNK).